The following is a 61-amino-acid chain: DNA gyrase inhibitor YacG (61 aa).

The Zn(2+) site is built by Cys14, Cys17, Cys29, and Cys33.

It belongs to the DNA gyrase inhibitor YacG family. In terms of assembly, interacts with GyrB. Zn(2+) serves as cofactor.

In terms of biological role, inhibits all the catalytic activities of DNA gyrase by preventing its interaction with DNA. Acts by binding directly to the C-terminal domain of GyrB, which probably disrupts DNA binding by the gyrase. This chain is DNA gyrase inhibitor YacG, found in Zymomonas mobilis subsp. mobilis (strain ATCC 31821 / ZM4 / CP4).